A 355-amino-acid polypeptide reads, in one-letter code: Na(+)/H(+) exchange regulatory cofactor NHE-RF1 (355 aa).

S2 carries the post-translational modification N-acetylserine. S2 and S46 each carry phosphoserine. A PDZ 1 domain is found at 14–94 (LCCLEKGPNG…AVRLLVVDPE (81 aa)). Composition is skewed to basic and acidic residues over residues 110 to 119 (LLRPQEKSEQ) and 127 to 146 (DTHE…RELR). The interval 110–146 (LLRPQEKSEQAEPPAAADTHEAGDQNEAEKSHLRELR) is disordered. The PDZ 2 domain maps to 149-229 (LCTMKKGPNG…EAKLLVVDKE (81 aa)). Residues 244–355 (EHLDGPLPEP…SKKNELFSNL (112 aa)) form a disordered region. The span at 259-268 (IQKESSREAL) shows a compositional bias: basic and acidic residues. S264, S275, S285, and S286 each carry phosphoserine. Residues 270 to 286 (EPASESPRPALARSASS) are compositionally biased toward low complexity. A Phosphothreonine modification is found at T288. Phosphoserine occurs at positions 289, 294, and 297. Positions 303 to 323 (STEPSSTSSSSSDPILDLNIS) are enriched in low complexity. Over residues 345–355 (WSKKNELFSNL) the composition is skewed to basic and acidic residues.

Homodimer, and heterodimer with NHERF2. Binds the N-termini of EZR, RDX and MSN. Binds the C-termini of PDGFRA, PDGFRB, ADRB2 and NOS2. Binds ARHGAP17, EPI64, RACK1, OPRK1, GNAQ, CTNNB1, PLCB3 and CLCN3. Forms a complex with CFTR and SLC4A7. Forms a complex with SLC4A7 and ATP6V1B1. Binds PDZK1. Binds the C-terminus of PAG1. In resting T-cells, part of a PAG1-NHERF1-MSN complex which is disrupted upon TCR activation. Directly interacts with HTR4. Interacts with MCC. Interacts with TRPC4 (via the PDZ-binding domain). Interacts (via the PDZ 1 domain) with PODXL (via the C-terminal PDZ-binding motif DTHL); interaction is not detected in glomerular epithelium cells. Interacts (via the PDZ 1 domain) with PODXL (via the C-terminal PDZ-binding motif DTHL); the interaction take place early in the secretory pathway and is necessary for its apical membrane sorting. Interacts with SLC34A1. Interacts with CFTR, SLC26A3 and SLC26A6. Interacts (via PDZ domains) with ACE2 (via PDZ-binding motif); the interaction may enhance ACE2 membrane residence. Expressed in spermatogenic cells.

Its subcellular location is the cytoplasm. It localises to the apical cell membrane. It is found in the cell projection. The protein localises to the filopodium. The protein resides in the ruffle. Its subcellular location is the microvillus. It localises to the endomembrane system. In terms of biological role, scaffold protein that connects plasma membrane proteins with members of the ezrin/moesin/radixin family and thereby helps to link them to the actin cytoskeleton and to regulate their surface expression. Necessary for recycling of internalized ADRB2. Was first known to play a role in the regulation of the activity and subcellular location of SLC9A3. Necessary for cAMP-mediated phosphorylation and inhibition of SLC9A3. May enhance Wnt signaling. May participate in HTR4 targeting to microvilli. Involved in the regulation of phosphate reabsorption in the renal proximal tubules. Involved in sperm capacitation. May participate in the regulation of the chloride and bicarbonate homeostasis in spermatozoa. This is Na(+)/H(+) exchange regulatory cofactor NHE-RF1 (Nherf1) from Mus musculus (Mouse).